We begin with the raw amino-acid sequence, 408 residues long: Na(+)-translocating NADH-quinone reductase subunit F (408 aa).

The helical transmembrane segment at 6–26 (IILGVVMFTAIVLALVAIILA) threads the bilayer. One can recognise a 2Fe-2S ferredoxin-type domain in the interval 35 to 127 (GDVTIRINGE…DMDVEVPEEV (93 aa)). 4 residues coordinate [2Fe-2S] cluster: cysteine 70, cysteine 76, cysteine 79, and cysteine 111. The FAD-binding FR-type domain maps to 130-270 (VKAWECTVES…YGPFGEFFAK (141 aa)).

The protein belongs to the NqrF family. In terms of assembly, composed of six subunits; NqrA, NqrB, NqrC, NqrD, NqrE and NqrF. Requires [2Fe-2S] cluster as cofactor. FAD serves as cofactor.

Its subcellular location is the cell inner membrane. The catalysed reaction is a ubiquinone + n Na(+)(in) + NADH + H(+) = a ubiquinol + n Na(+)(out) + NAD(+). In terms of biological role, NQR complex catalyzes the reduction of ubiquinone-1 to ubiquinol by two successive reactions, coupled with the transport of Na(+) ions from the cytoplasm to the periplasm. The first step is catalyzed by NqrF, which accepts electrons from NADH and reduces ubiquinone-1 to ubisemiquinone by a one-electron transfer pathway. This chain is Na(+)-translocating NADH-quinone reductase subunit F, found in Marinomonas sp. (strain MWYL1).